The following is a 95-amino-acid chain: Aspartyl/glutamyl-tRNA(Asn/Gln) amidotransferase subunit C (95 aa).

Basic and acidic residues predominate over residues 55 to 67 (ALERRNVTREDQV). The disordered stretch occupies residues 55–83 (ALERRNVTREDQVHNSLTNDKALENAPET).

It belongs to the GatC family. Heterotrimer of A, B and C subunits.

It carries out the reaction L-glutamyl-tRNA(Gln) + L-glutamine + ATP + H2O = L-glutaminyl-tRNA(Gln) + L-glutamate + ADP + phosphate + H(+). The catalysed reaction is L-aspartyl-tRNA(Asn) + L-glutamine + ATP + H2O = L-asparaginyl-tRNA(Asn) + L-glutamate + ADP + phosphate + 2 H(+). Allows the formation of correctly charged Asn-tRNA(Asn) or Gln-tRNA(Gln) through the transamidation of misacylated Asp-tRNA(Asn) or Glu-tRNA(Gln) in organisms which lack either or both of asparaginyl-tRNA or glutaminyl-tRNA synthetases. The reaction takes place in the presence of glutamine and ATP through an activated phospho-Asp-tRNA(Asn) or phospho-Glu-tRNA(Gln). This chain is Aspartyl/glutamyl-tRNA(Asn/Gln) amidotransferase subunit C, found in Natranaerobius thermophilus (strain ATCC BAA-1301 / DSM 18059 / JW/NM-WN-LF).